The chain runs to 352 residues: Peptide chain release factor 1 (352 aa).

Gln-233 is modified (N5-methylglutamine). Residues 288-309 are disordered; that stretch reads NAKDRKEQVGSGDRSERIRTYN. The span at 289-306 shows a compositional bias: basic and acidic residues; sequence AKDRKEQVGSGDRSERIR.

This sequence belongs to the prokaryotic/mitochondrial release factor family. Post-translationally, methylated by PrmC. Methylation increases the termination efficiency of RF1.

The protein resides in the cytoplasm. Functionally, peptide chain release factor 1 directs the termination of translation in response to the peptide chain termination codons UAG and UAA. This chain is Peptide chain release factor 1, found in Helicobacter pylori (strain HPAG1).